A 101-amino-acid polypeptide reads, in one-letter code: Urease subunit beta (101 aa).

This sequence belongs to the urease beta subunit family. In terms of assembly, heterotrimer of UreA (gamma), UreB (beta) and UreC (alpha) subunits. Three heterotrimers associate to form the active enzyme.

Its subcellular location is the cytoplasm. It carries out the reaction urea + 2 H2O + H(+) = hydrogencarbonate + 2 NH4(+). It participates in nitrogen metabolism; urea degradation; CO(2) and NH(3) from urea (urease route): step 1/1. The chain is Urease subunit beta from Chelativorans sp. (strain BNC1).